A 1518-amino-acid polypeptide reads, in one-letter code: Probable serine/threonine-protein kinase HSL1 (1518 aa).

Disordered stretches follow at residues 1–43 (MTGH…GHLE) and 55–83 (RLSQ…PWKL). Residues 55–68 (RLSQPDSTVSVATK) show a composition bias toward polar residues. One can recognise a Protein kinase domain in the interval 81-369 (WKLGKTLGKG…TQEILKHPLI (289 aa)). ATP contacts are provided by residues 87–95 (LGKGSSGRV) and K110. The Proton acceptor role is filled by D239. The disordered stretch occupies residues 467 to 502 (LSSSSENKKSATESSVNEPRIEYASKTANNTGLRSE). Residues 492 to 501 (KTANNTGLRS) show a composition bias toward polar residues. S511 is subject to Phosphoserine. The segment covering 599–611 (SNSRLSLSASTSR) has biased composition (low complexity). Residues 599-651 (SNSRLSLSASTSRETVHDNEMPLPQLPKSPSRYSLSRRAIHASPSTKSIHKSL) are disordered. S629 and S685 each carry phosphoserine. The segment at 741 to 783 (EEEDNEKERDTQRQRQNDTKSSADTFTISGVSTNKENEGPEYP) is disordered. Residues 746-758 (EKERDTQRQRQND) show a composition bias toward basic and acidic residues. Over residues 759 to 774 (TKSSADTFTISGVSTN) the composition is skewed to polar residues. A phosphoserine mark is found at S837 and S866. A compositionally biased stretch (basic and acidic residues) spans 856 to 876 (EQLQKKNDRPSPLKPIQHQEL). Disordered stretches follow at residues 856-898 (EQLQ…RRNI), 1005-1030 (DDKH…KQSA), 1150-1170 (APSD…RASV), and 1220-1243 (SPEN…RDSN). S1220 is modified (phosphoserine). Residues 1222-1243 (ENPSNTHMQKRFSSTRGSRDSN) show a composition bias toward polar residues. S1250 is modified (phosphoserine). Residues 1259-1291 (EEDQDGHTSQADILESSMSYSKRRPSEESVNPK) form a disordered region. The segment covering 1265–1278 (HTSQADILESSMSY) has biased composition (polar residues). S1284, S1287, and S1325 each carry phosphoserine.

The protein belongs to the protein kinase superfamily. CAMK Ser/Thr protein kinase family. NIM1 subfamily.

It localises to the bud neck. The enzyme catalyses L-seryl-[protein] + ATP = O-phospho-L-seryl-[protein] + ADP + H(+). The catalysed reaction is L-threonyl-[protein] + ATP = O-phospho-L-threonyl-[protein] + ADP + H(+). The protein is Probable serine/threonine-protein kinase HSL1 (HSL1) of Saccharomyces cerevisiae (strain ATCC 204508 / S288c) (Baker's yeast).